An 821-amino-acid polypeptide reads, in one-letter code: Condensin-2 complex subunit kle-2 (821 aa).

The segment at 389–426 is disordered; the sequence is VMQNDEPNTSRRPDENYAPMDFDDDFGGGGDDDDDDYI. A compositionally biased stretch (acidic residues) spans 409-424; sequence DFDDDFGGGGDDDDDD. Residues 529-561 adopt a coiled-coil conformation; the sequence is TAILAEKKRRIKEKTAKIREARIQNMQRKRTAR.

Belongs to the CND2 H2 (condensin-2 subunit 2) family. Component of the condensin II complex, which contains the mix-1/SMC2 and smc-4/SMC4 heterodimer, and three non SMC subunits, capg-2, kle-2 and hcp-6 that probably regulate the complex. Within the complex, interacts with mix-1, smc-4, capg-2 and hcp-6.

It is found in the nucleus. The protein localises to the chromosome. It localises to the centromere. In terms of biological role, regulatory subunit of the condensin II complex, a complex that seems to play a role in prophase chromosome condensation and in chromosome segregation in mitosis and in meiosis. The polypeptide is Condensin-2 complex subunit kle-2 (kle-2) (Caenorhabditis elegans).